Consider the following 212-residue polypeptide: Thymidylate kinase (212 aa).

11–18 is a binding site for ATP; the sequence is GPDGAGKS.

The protein belongs to the thymidylate kinase family.

It catalyses the reaction dTMP + ATP = dTDP + ADP. Functionally, phosphorylation of dTMP to form dTDP in both de novo and salvage pathways of dTTP synthesis. The sequence is that of Thymidylate kinase from Streptococcus gordonii (strain Challis / ATCC 35105 / BCRC 15272 / CH1 / DL1 / V288).